The following is an 842-amino-acid chain: Leucine--tRNA ligase (842 aa).

Residues 44 to 55 (PYPSANGLHVGH) carry the 'HIGH' region motif. A 'KMSKS' region motif is present at residues 619-623 (KMSKS). An ATP-binding site is contributed by lysine 622.

Belongs to the class-I aminoacyl-tRNA synthetase family.

It localises to the cytoplasm. The enzyme catalyses tRNA(Leu) + L-leucine + ATP = L-leucyl-tRNA(Leu) + AMP + diphosphate. The sequence is that of Leucine--tRNA ligase from Borrelia duttonii (strain Ly).